A 108-amino-acid chain; its full sequence is Nucleoid-associated protein PLES_37951 (108 aa).

Disordered regions lie at residues 1–25 and 87–108; these read MMKG…KMQE and NQEK…KMPF. The segment covering 87-98 has biased composition (polar residues); sequence NQEKMSGFTSGM.

The protein belongs to the YbaB/EbfC family. Homodimer.

Its subcellular location is the cytoplasm. The protein resides in the nucleoid. Binds to DNA and alters its conformation. May be involved in regulation of gene expression, nucleoid organization and DNA protection. This is Nucleoid-associated protein PLES_37951 from Pseudomonas aeruginosa (strain LESB58).